Consider the following 464-residue polypeptide: Cysteine--tRNA ligase (464 aa).

C28 contacts Zn(2+). Positions 30–40 match the 'HIGH' region motif; that stretch reads ITAYDFCHIGH. Zn(2+)-binding residues include C210, H235, and E239. The 'KMSKS' region signature appears at 267–271; it reads KMSKS. K270 lines the ATP pocket.

The protein belongs to the class-I aminoacyl-tRNA synthetase family. As to quaternary structure, monomer. Requires Zn(2+) as cofactor.

The protein resides in the cytoplasm. It catalyses the reaction tRNA(Cys) + L-cysteine + ATP = L-cysteinyl-tRNA(Cys) + AMP + diphosphate. The chain is Cysteine--tRNA ligase from Buchnera aphidicola subsp. Baizongia pistaciae (strain Bp).